The following is a 709-amino-acid chain: Polyribonucleotide nucleotidyltransferase (709 aa).

Residues Asp-486 and Asp-492 each contribute to the Mg(2+) site. In terms of domain architecture, KH spans 553–612; it reads PRIHTIKINPDKIKDVIGKGGSVIRALTEETGTTIEIEDDGTVKIAATDGEKAKHAISRI. An S1 motif domain is found at 622–690; it reads ARIYTGKVTR…RQGRVRLSIK (69 aa).

It belongs to the polyribonucleotide nucleotidyltransferase family. As to quaternary structure, component of the RNA degradosome, which is a multiprotein complex involved in RNA processing and mRNA degradation. It depends on Mg(2+) as a cofactor.

Its subcellular location is the cytoplasm. The enzyme catalyses RNA(n+1) + phosphate = RNA(n) + a ribonucleoside 5'-diphosphate. Its function is as follows. Involved in mRNA degradation. Catalyzes the phosphorolysis of single-stranded polyribonucleotides processively in the 3'- to 5'-direction. This chain is Polyribonucleotide nucleotidyltransferase, found in Photorhabdus laumondii subsp. laumondii (strain DSM 15139 / CIP 105565 / TT01) (Photorhabdus luminescens subsp. laumondii).